The primary structure comprises 386 residues: Succinyl-diaminopimelate desuccinylase (386 aa).

His76 contacts Zn(2+). The active site involves Asp78. Asp110 is a binding site for Zn(2+). Catalysis depends on Glu144, which acts as the Proton acceptor. Residues Glu145, Glu173, and His359 each contribute to the Zn(2+) site.

Belongs to the peptidase M20A family. DapE subfamily. Homodimer. Requires Zn(2+) as cofactor. Co(2+) serves as cofactor.

The catalysed reaction is N-succinyl-(2S,6S)-2,6-diaminopimelate + H2O = (2S,6S)-2,6-diaminopimelate + succinate. It functions in the pathway amino-acid biosynthesis; L-lysine biosynthesis via DAP pathway; LL-2,6-diaminopimelate from (S)-tetrahydrodipicolinate (succinylase route): step 3/3. Its function is as follows. Catalyzes the hydrolysis of N-succinyl-L,L-diaminopimelic acid (SDAP), forming succinate and LL-2,6-diaminopimelate (DAP), an intermediate involved in the bacterial biosynthesis of lysine and meso-diaminopimelic acid, an essential component of bacterial cell walls. The chain is Succinyl-diaminopimelate desuccinylase from Chromohalobacter salexigens (strain ATCC BAA-138 / DSM 3043 / CIP 106854 / NCIMB 13768 / 1H11).